Consider the following 426-residue polypeptide: Isocitrate dehydrogenase [NADP] (426 aa).

Residues serine 123, asparagine 125, arginine 129, arginine 139, and arginine 162 each contribute to the D-threo-isocitrate site. Position 312 (aspartate 312) interacts with Mg(2+). NADP(+) contacts are provided by residues 344–350, asparagine 357, and lysine 404; that span reads HGTAWDI.

It belongs to the isocitrate and isopropylmalate dehydrogenases family. Homodimer. The cofactor is Mg(2+). Mn(2+) serves as cofactor.

The enzyme catalyses D-threo-isocitrate + NADP(+) = 2-oxoglutarate + CO2 + NADPH. Its function is as follows. Catalyzes the oxidative decarboxylation of isocitrate to 2-oxoglutarate and carbon dioxide with the concomitant reduction of NADP(+). This chain is Isocitrate dehydrogenase [NADP] (icd), found in Aquifex aeolicus (strain VF5).